A 476-amino-acid chain; its full sequence is Cys-Gly metallodipeptidase dug1 (476 aa).

Position 99 (His-99) interacts with Zn(2+). Asp-101 is a catalytic residue. Zn(2+) is bound at residue Asp-133. The active-site Proton acceptor is the Glu-167. Positions 168, 196, and 446 each coordinate Zn(2+).

It belongs to the peptidase M20A family. In terms of assembly, homodimer. Component of the GSH degradosomal complex. It depends on Zn(2+) as a cofactor. Mn(2+) is required as a cofactor.

The protein localises to the cytoplasm. Functionally, catalytic component of the GSH degradosomal complex involved in the degradation of glutathione (GSH) and other peptides containing a gamma-glu-X bond. Has a Gly-Cys dipeptidase activity. In Schizosaccharomyces pombe (strain 972 / ATCC 24843) (Fission yeast), this protein is Cys-Gly metallodipeptidase dug1 (dug1).